Here is an 81-residue protein sequence, read N- to C-terminus: ATP synthase subunit c, chloroplastic (81 aa).

2 helical membrane-spanning segments follow: residues 3–23 (PLIS…ASIG) and 53–73 (LLLS…VALA).

It belongs to the ATPase C chain family. As to quaternary structure, F-type ATPases have 2 components, F(1) - the catalytic core - and F(0) - the membrane proton channel. F(1) has five subunits: alpha(3), beta(3), gamma(1), delta(1), epsilon(1). F(0) has four main subunits: a(1), b(1), b'(1) and c(10-14). The alpha and beta chains form an alternating ring which encloses part of the gamma chain. F(1) is attached to F(0) by a central stalk formed by the gamma and epsilon chains, while a peripheral stalk is formed by the delta, b and b' chains.

It localises to the plastid. The protein localises to the chloroplast thylakoid membrane. In terms of biological role, f(1)F(0) ATP synthase produces ATP from ADP in the presence of a proton or sodium gradient. F-type ATPases consist of two structural domains, F(1) containing the extramembraneous catalytic core and F(0) containing the membrane proton channel, linked together by a central stalk and a peripheral stalk. During catalysis, ATP synthesis in the catalytic domain of F(1) is coupled via a rotary mechanism of the central stalk subunits to proton translocation. Its function is as follows. Key component of the F(0) channel; it plays a direct role in translocation across the membrane. A homomeric c-ring of between 10-14 subunits forms the central stalk rotor element with the F(1) delta and epsilon subunits. This chain is ATP synthase subunit c, chloroplastic, found in Angiopteris evecta (Mule's foot fern).